Consider the following 242-residue polypeptide: Small ribosomal subunit protein uS3 (242 aa).

A KH type-2 domain is found at 39-109 (IRQYVEKNLA…QIRINVIEVA (71 aa)). A disordered region spans residues 220-242 (VPAQAPRRQQRRRQQFEDRSSEG). Residues 233-242 (QQFEDRSSEG) are compositionally biased toward basic and acidic residues.

The protein belongs to the universal ribosomal protein uS3 family. Part of the 30S ribosomal subunit. Forms a tight complex with proteins S10 and S14.

In terms of biological role, binds the lower part of the 30S subunit head. Binds mRNA in the 70S ribosome, positioning it for translation. This Microcystis aeruginosa (strain NIES-843 / IAM M-2473) protein is Small ribosomal subunit protein uS3.